The chain runs to 363 residues: Protein RecA (363 aa).

Glycine 66–threonine 73 contributes to the ATP binding site. Residues tyrosine 327–lysine 363 are disordered. Positions isoleucine 329–lysine 363 are enriched in basic and acidic residues.

This sequence belongs to the RecA family.

The protein resides in the cytoplasm. Its function is as follows. Can catalyze the hydrolysis of ATP in the presence of single-stranded DNA, the ATP-dependent uptake of single-stranded DNA by duplex DNA, and the ATP-dependent hybridization of homologous single-stranded DNAs. It interacts with LexA causing its activation and leading to its autocatalytic cleavage. This chain is Protein RecA, found in Lactobacillus acidophilus (strain ATCC 700396 / NCK56 / N2 / NCFM).